The chain runs to 355 residues: Protein RecA (355 aa).

Residue 66–73 participates in ATP binding; that stretch reads GPESSGKT. Residues 331–355 form a disordered region; that stretch reads DVPEEDLPTTEDEQINILPDDSTEE. A compositionally biased stretch (acidic residues) spans 332 to 344; that stretch reads VPEEDLPTTEDEQ.

This sequence belongs to the RecA family.

It localises to the cytoplasm. Can catalyze the hydrolysis of ATP in the presence of single-stranded DNA, the ATP-dependent uptake of single-stranded DNA by duplex DNA, and the ATP-dependent hybridization of homologous single-stranded DNAs. It interacts with LexA causing its activation and leading to its autocatalytic cleavage. This chain is Protein RecA, found in Latilactobacillus sakei subsp. sakei (strain 23K) (Lactobacillus sakei subsp. sakei).